The sequence spans 335 residues: Glyceraldehyde-3-phosphate dehydrogenase 2 (335 aa).

NAD(+) is bound by residues 13 to 14, D35, and R80; that span reads RI. S125 and S151 each carry phosphoserine. 151–153 is a D-glyceraldehyde 3-phosphate binding site; it reads SCT. C152 serves as the catalytic Nucleophile. A phosphothreonine mark is found at T153, T154, T182, and T184. T182 lines the D-glyceraldehyde 3-phosphate pocket. S192, S203, and S209 each carry phosphoserine. The residue at position 211 (T211) is a Phosphothreonine. D-glyceraldehyde 3-phosphate contacts are provided by residues 211 to 212 and R234; that span reads TG. The residue at position 237 (T237) is a Phosphothreonine. A Phosphoserine modification is found at S241. Residue N316 participates in NAD(+) binding.

Belongs to the glyceraldehyde-3-phosphate dehydrogenase family. Homotetramer.

Its subcellular location is the cytoplasm. It catalyses the reaction D-glyceraldehyde 3-phosphate + phosphate + NAD(+) = (2R)-3-phospho-glyceroyl phosphate + NADH + H(+). It participates in carbohydrate degradation; glycolysis; pyruvate from D-glyceraldehyde 3-phosphate: step 1/5. The protein is Glyceraldehyde-3-phosphate dehydrogenase 2 (gpd3) of Schizosaccharomyces pombe (strain 972 / ATCC 24843) (Fission yeast).